The sequence spans 340 residues: Uroporphyrinogen decarboxylase (340 aa).

Residues 23–27, Asp-72, Tyr-147, Thr-202, and His-316 each bind substrate; that span reads RQAGR.

This sequence belongs to the uroporphyrinogen decarboxylase family. Homodimer.

The protein localises to the cytoplasm. The enzyme catalyses uroporphyrinogen III + 4 H(+) = coproporphyrinogen III + 4 CO2. Its pathway is porphyrin-containing compound metabolism; protoporphyrin-IX biosynthesis; coproporphyrinogen-III from 5-aminolevulinate: step 4/4. Functionally, catalyzes the decarboxylation of four acetate groups of uroporphyrinogen-III to yield coproporphyrinogen-III. In Pelobacter propionicus (strain DSM 2379 / NBRC 103807 / OttBd1), this protein is Uroporphyrinogen decarboxylase.